The primary structure comprises 227 residues: Putative ankyrin repeat protein RF_0314 (227 aa).

ANK repeat units follow at residues Asn94–Ile126, Asp130–Leu164, and Leu168–Phe199.

The polypeptide is Putative ankyrin repeat protein RF_0314 (Rickettsia felis (strain ATCC VR-1525 / URRWXCal2) (Rickettsia azadi)).